We begin with the raw amino-acid sequence, 248 residues long: DNA repair protein RecO (248 aa).

The protein belongs to the RecO family.

Its function is as follows. Involved in DNA repair and RecF pathway recombination. In Bradyrhizobium sp. (strain ORS 278), this protein is DNA repair protein RecO.